The following is a 311-amino-acid chain: R2-like ligand binding oxidase (311 aa).

Residues Glu68, Glu101, and His104 each contribute to the Mn(2+) site. The segment at residues 71–162 (VTQDIQPFMA…AAQVRASVTY (92 aa)) is a cross-link (3-(O4'-tyrosyl)-valine (Val-Tyr)). Glu101 lines the Fe cation pocket. Residues Glu167, Glu202, and His205 each coordinate Fe cation.

This sequence belongs to the ribonucleoside diphosphate reductase small chain family. R2-like ligand binding oxidase subfamily. Homodimer. Requires Fe cation as cofactor. The cofactor is Mn(2+).

Probable oxidase that might be involved in lipid metabolism. The polypeptide is R2-like ligand binding oxidase (Mycolicibacterium paratuberculosis (strain ATCC BAA-968 / K-10) (Mycobacterium paratuberculosis)).